The sequence spans 276 residues: Pyridinium-3,5-bisthiocarboxylic acid mononucleotide synthase (276 aa).

Cysteine 176 (nucleophile and sulfur donor) is an active-site residue. Position 176 is a 2,3-didehydroalanine (Cys) (cysteine 176).

Belongs to the LarE family.

The catalysed reaction is pyridinium-3,5-dicarboxylate mononucleotide + [LarE protein]-L-cysteine + ATP = [LarE protein]-dehydroalanine + pyridinium-3-carboxylate-5-thiocarboxylate mononucleotide + AMP + diphosphate + H(+). It catalyses the reaction [LarE protein]-L-cysteine + pyridinium-3-carboxylate-5-thiocarboxylate mononucleotide + ATP = pyridinium-3,5-bisthiocarboxylate mononucleotide + [LarE protein]-dehydroalanine + AMP + diphosphate + H(+). Involved in the biosynthesis of a nickel-pincer cofactor ((SCS)Ni(II) pincer complex). Catalyzes the ATP-dependent incorporation of two sulfur atoms in pyridinium-3,5-biscarboxylic acid mononucleotide (P2CMN) to yield pyridinium-3,5-bisthiocarboxylic acid mononucleotide (P2TMN). The source of sulfur is the enzyme itself: Cys-176 of LarE is the sulfur donor, thereby being converted into dehydroalanine, and is not regenerated in vivo. Thus, two molecules of LarE undergo sacrificial sulfur transfer to create one P2TMN. Binds nickel. Is required for the activation of the lactate racemase LarA. May also be involved in the activation of other nickel-pincer cofactor-dependent enzymes. In Lactiplantibacillus plantarum (strain ATCC BAA-793 / NCIMB 8826 / WCFS1) (Lactobacillus plantarum), this protein is Pyridinium-3,5-bisthiocarboxylic acid mononucleotide synthase.